Consider the following 798-residue polypeptide: Tripartite terminase subunit 1 (798 aa).

A C3H1-type zinc finger spans residues 191–219; the sequence is CFQCYEELMAVPNQGRSINRRMQGLLCDH. A compositionally biased stretch (low complexity) spans 416–429; it reads AAGAARSRAEAASG. Residues 416-458 form a disordered region; the sequence is AAGAARSRAEAASGAGAGGEEGAGAAAGRGNTGGDEGAGTTTA. Gly residues predominate over residues 430–452; sequence AGAGGEEGAGAAAGRGNTGGDEG. 674 to 681 lines the ATP pocket; that stretch reads YNETFGKQ.

It belongs to the herpesviridae TRM1 protein family. As to quaternary structure, associates with TRM2 and TRM3 to form the tripartite terminase complex. Interacts with portal protein.

It is found in the host nucleus. In terms of biological role, component of the molecular motor that translocates viral genomic DNA in empty capsid during DNA packaging. Forms a tripartite terminase complex together with TRM2 and TRM3 in the host cytoplasm. Once the complex reaches the host nucleus, it interacts with the capsid portal vertex. This portal forms a ring in which genomic DNA is translocated into the capsid. TRM1 carries an endonuclease activity that plays an important role for the cleavage of concatemeric viral DNA into unit length genomes. The chain is Tripartite terminase subunit 1 from Murid herpesvirus 1 (strain Smith) (MuHV-1).